Reading from the N-terminus, the 611-residue chain is Elongation factor 1 alpha-like protein (611 aa).

Disordered regions lie at residues 1–21 (MAYS…DEGE) and 105–138 (SISQ…DEKT). S124 is subject to Phosphoserine. Over residues 126–138 (GERNGEEANDEKT) the composition is skewed to basic and acidic residues. Positions 165–390 (LPHLSFVVLG…LENAAFKISK (226 aa)) constitute a tr-type G domain. A G1 region spans residues 174 to 181 (GHVDAGKS). 174–181 (GHVDAGKS) is a GTP binding site. Residues 230–234 (GVTVS) are G2. The tract at residues 251–254 (DAPG) is G3. GTP-binding positions include 313–316 (NKMD) and 352–354 (SGF). The segment at 313 to 316 (NKMD) is G4. Positions 352–354 (SGF) are G5.

Belongs to the TRAFAC class translation factor GTPase superfamily. Classic translation factor GTPase family. In terms of assembly, component of the Dom34-Hbs1 complex, also named Pelota-HBS1L complex, composed of DOM34 and HBS1.

It localises to the cytoplasm. The enzyme catalyses GTP + H2O = GDP + phosphate + H(+). Functionally, GTPase component of the Dom34-Hbs1 complex, a complex that recognizes stalled ribosomes and triggers the No-Go Decay (NGD) pathway. The Dom34-Hbs1 complex recognizes ribosomes stalled at the 3' end of an mRNA and engages stalled ribosomes by destabilizing mRNA in the mRNA channel. Following ribosome-binding, the Pelota-HBS1L complex promotes the disassembly of stalled ribosomes, followed by degradation of damaged mRNAs as part of the NGD pathway. The Dom34-Hbs1 complex is also involved in non-functional rRNA decay. The sequence is that of Elongation factor 1 alpha-like protein from Saccharomyces cerevisiae (strain ATCC 204508 / S288c) (Baker's yeast).